The chain runs to 128 residues: Small ribosomal subunit protein uS12 (128 aa).

3-methylthioaspartic acid is present on Asp-89. The interval 101-128 is disordered; it reads SLDTSGVADRRNGRSKYGAKRPKEGAKK.

This sequence belongs to the universal ribosomal protein uS12 family. In terms of assembly, part of the 30S ribosomal subunit. Contacts proteins S8 and S17. May interact with IF1 in the 30S initiation complex.

In terms of biological role, with S4 and S5 plays an important role in translational accuracy. Functionally, interacts with and stabilizes bases of the 16S rRNA that are involved in tRNA selection in the A site and with the mRNA backbone. Located at the interface of the 30S and 50S subunits, it traverses the body of the 30S subunit contacting proteins on the other side and probably holding the rRNA structure together. The combined cluster of proteins S8, S12 and S17 appears to hold together the shoulder and platform of the 30S subunit. This chain is Small ribosomal subunit protein uS12, found in Chloroherpeton thalassium (strain ATCC 35110 / GB-78).